The following is a 171-amino-acid chain: Co-chaperone protein HscB homolog (171 aa).

The 73-residue stretch at serine 3–leucine 75 folds into the J domain.

This sequence belongs to the HscB family. In terms of assembly, interacts with HscA and stimulates its ATPase activity.

In terms of biological role, co-chaperone involved in the maturation of iron-sulfur cluster-containing proteins. Seems to help targeting proteins to be folded toward HscA. This chain is Co-chaperone protein HscB homolog, found in Azotobacter vinelandii.